The chain runs to 302 residues: tRNA pseudouridine synthase B (302 aa).

Residue Asp38 is the Nucleophile of the active site.

The protein belongs to the pseudouridine synthase TruB family. Type 1 subfamily.

It carries out the reaction uridine(55) in tRNA = pseudouridine(55) in tRNA. In terms of biological role, responsible for synthesis of pseudouridine from uracil-55 in the psi GC loop of transfer RNAs. In Geobacillus thermodenitrificans (strain NG80-2), this protein is tRNA pseudouridine synthase B.